Reading from the N-terminus, the 339-residue chain is D-erythrose-4-phosphate dehydrogenase (339 aa).

Position 12-13 (12-13) interacts with NAD(+); that stretch reads RI. Residues 154-156, Arg200, 213-214, and Arg236 each bind substrate; these read SCT and TK. The active-site Nucleophile is the Cys155. Residue Asn318 participates in NAD(+) binding.

Belongs to the glyceraldehyde-3-phosphate dehydrogenase family. Epd subfamily. Homotetramer.

The protein localises to the cytoplasm. It catalyses the reaction D-erythrose 4-phosphate + NAD(+) + H2O = 4-phospho-D-erythronate + NADH + 2 H(+). It participates in cofactor biosynthesis; pyridoxine 5'-phosphate biosynthesis; pyridoxine 5'-phosphate from D-erythrose 4-phosphate: step 1/5. Catalyzes the NAD-dependent conversion of D-erythrose 4-phosphate to 4-phosphoerythronate. The chain is D-erythrose-4-phosphate dehydrogenase from Photorhabdus laumondii subsp. laumondii (strain DSM 15139 / CIP 105565 / TT01) (Photorhabdus luminescens subsp. laumondii).